The following is a 121-amino-acid chain: Basic phospholipase A2 BmjeTX-II (121 aa).

Disulfide bonds link C26/C114, C28/C45, C44/C95, C50/C121, C51/C88, C58/C82, and C76/C86. Residues Y27, G29, and G31 each coordinate Ca(2+). H48 is a catalytic residue. D49 contributes to the Ca(2+) binding site. The active site involves D89.

It depends on Ca(2+) as a cofactor. As to expression, expressed by the venom gland.

The protein resides in the secreted. It catalyses the reaction a 1,2-diacyl-sn-glycero-3-phosphocholine + H2O = a 1-acyl-sn-glycero-3-phosphocholine + a fatty acid + H(+). Functionally, snake venom phospholipase A2 (PLA2) that induces blockade of neuromuscular contraction in an indirectly stimulated chick biventer cervicis nerve-muscle preparation. Does not inhibit contraction of chick biventer cervicic nerve-muscle preparation in response to treatment with acetylcholine or KCl. The neuromuscular blockade is mediated by inhibitory action at the presynaptic motor nerve endings. Lyses skeletal myoblasts and myotubes in vitro, and intramuscular injection causes local muscle necrosis. Induces edema in the mouse foot pad. Induces a transient increase of IL-6 levels. PLA2 catalyzes the calcium-dependent hydrolysis of the 2-acyl groups in 3-sn-phosphoglycerides. This is Basic phospholipase A2 BmjeTX-II from Bothrops marajoensis (Marajo lancehead).